The primary structure comprises 119 residues: NADH-quinone oxidoreductase subunit A (119 aa).

3 helical membrane passes run Val9–Leu29, Leu63–Val83, and Ile88–Val108.

Belongs to the complex I subunit 3 family. As to quaternary structure, NDH-1 is composed of 14 different subunits. Subunits NuoA, H, J, K, L, M, N constitute the membrane sector of the complex.

It localises to the cell inner membrane. The catalysed reaction is a quinone + NADH + 5 H(+)(in) = a quinol + NAD(+) + 4 H(+)(out). NDH-1 shuttles electrons from NADH, via FMN and iron-sulfur (Fe-S) centers, to quinones in the respiratory chain. The immediate electron acceptor for the enzyme in this species is believed to be ubiquinone. Couples the redox reaction to proton translocation (for every two electrons transferred, four hydrogen ions are translocated across the cytoplasmic membrane), and thus conserves the redox energy in a proton gradient. This chain is NADH-quinone oxidoreductase subunit A, found in Leptothrix cholodnii (strain ATCC 51168 / LMG 8142 / SP-6) (Leptothrix discophora (strain SP-6)).